Reading from the N-terminus, the 891-residue chain is MKILKSLVLLVLFMAMPAKADDAFSWMSTSFGGLKSLFGCLEVPEFTSFQEGNIGISLSTAGIWQSTGNTVQKGKLLKINWSTSGITLEPRKYLVLYRIDPRFSMPQVFIKTYNYSKLQFEALGFPRFVTDNNSETPGTIPPDKDLDALSFTKMSDFVKYFNYSNGNSRIEVKAGDVVNISLVGKDNFFSPNTLKLPNTVDNILTQELDSSIFAASALYTQSNLGDFDNRIIYSSAEQVCNMIDKERKSVCSGTGTATKYKNTDNGVIVGKPMITGAVQYFMGLIKACPANAGINTSPACYYDQGRGMIIKVGGQVIKGQDQSFVNSGSTQSSFIYYQATSGGIMDFTSDWQVSNMFSNSVLMNDWSRNFSNYASFVDYINKNDWSANFLYFGCYSMIVEIGNGANLINPDDQQNIKLEYLITSDGTLPDPSVRGMPVDYNFATDAPQDGYLWLRVVNPNSNIQGVVSVNYANYTGTTWFSDIIYNGAIKPITDQFRTFSQNFYIKLVKNSAVQNLAKTALTLYVTIFGLMFVTGALKLTAVEVITRICKIAIVAFLIREESWSFFNTYFFSAFTDGIDFFVTNVVGATSSRSNIFGFIDPIFDKYTNGRIWGLLFIELLQIHNGLAFIAIITIYSLITYFRAILEVIIGYVIAFIGVTVMISLAPFFIILMLFEKTKSLFDNWISTLLSYVVQPTILLIFFLLIDQVLSEQLLKVVVRACWDTLIPIKIGLDLTNLGIPIHFSFTLPFLPGIPFYVPDVPEISSSNILTNNANTFLVLFTTALLFYSYCLMSYSLVTFVNIVVGMLTNVTPARISGNYQERSDPVGAVMQDIDSVTKPIKKAAMAPARVFKDKIIDQNYKARKAEVGGEFTNKFLAERNDVKKEEGEKKE.

Positions 1–20 (MKILKSLVLLVLFMAMPAKA) are cleaved as a signal peptide. 6 helical membrane-spanning segments follow: residues 525 to 545 (VTIFGLMFVTGALKLTAVEVI), 568 to 588 (TYFFSAFTDGIDFFVTNVVGA), 614 to 634 (LLFIELLQIHNGLAFIAIITI), 652 to 672 (VIAFIGVTVMISLAPFFIILM), 685 to 705 (ISTLLSYVVQPTILLIFFLLI), and 776 to 796 (FLVLFTTALLFYSYCLMSYSL).

This sequence belongs to the TrbL/VirB6 family.

It localises to the cell membrane. This is an uncharacterized protein from Rickettsia conorii (strain ATCC VR-613 / Malish 7).